The sequence spans 228 residues: Phosphoribosylformylglycinamidine synthase subunit PurQ (228 aa).

A Glutamine amidotransferase type-1 domain is found at 3–226 (FAVIVFPGSN…IANWRDSYAI (224 aa)). The active-site Nucleophile is Cys-87. Residues His-195 and Glu-197 contribute to the active site.

As to quaternary structure, part of the FGAM synthase complex composed of 1 PurL, 1 PurQ and 2 PurS subunits.

It is found in the cytoplasm. It carries out the reaction N(2)-formyl-N(1)-(5-phospho-beta-D-ribosyl)glycinamide + L-glutamine + ATP + H2O = 2-formamido-N(1)-(5-O-phospho-beta-D-ribosyl)acetamidine + L-glutamate + ADP + phosphate + H(+). It catalyses the reaction L-glutamine + H2O = L-glutamate + NH4(+). It participates in purine metabolism; IMP biosynthesis via de novo pathway; 5-amino-1-(5-phospho-D-ribosyl)imidazole from N(2)-formyl-N(1)-(5-phospho-D-ribosyl)glycinamide: step 1/2. Functionally, part of the phosphoribosylformylglycinamidine synthase complex involved in the purines biosynthetic pathway. Catalyzes the ATP-dependent conversion of formylglycinamide ribonucleotide (FGAR) and glutamine to yield formylglycinamidine ribonucleotide (FGAM) and glutamate. The FGAM synthase complex is composed of three subunits. PurQ produces an ammonia molecule by converting glutamine to glutamate. PurL transfers the ammonia molecule to FGAR to form FGAM in an ATP-dependent manner. PurS interacts with PurQ and PurL and is thought to assist in the transfer of the ammonia molecule from PurQ to PurL. The protein is Phosphoribosylformylglycinamidine synthase subunit PurQ of Oceanobacillus iheyensis (strain DSM 14371 / CIP 107618 / JCM 11309 / KCTC 3954 / HTE831).